The chain runs to 171 residues: ATP synthase subunit b 2 (171 aa).

A helical transmembrane segment spans residues 9 to 29 (APWHHPVFWVAVAFVLFFVLF).

This sequence belongs to the ATPase B chain family. F-type ATPases have 2 components, F(1) - the catalytic core - and F(0) - the membrane proton channel. F(1) has five subunits: alpha(3), beta(3), gamma(1), delta(1), epsilon(1). F(0) has three main subunits: a(1), b(2) and c(10-14). The alpha and beta chains form an alternating ring which encloses part of the gamma chain. F(1) is attached to F(0) by a central stalk formed by the gamma and epsilon chains, while a peripheral stalk is formed by the delta and b chains.

Its subcellular location is the cell inner membrane. Functionally, f(1)F(0) ATP synthase produces ATP from ADP in the presence of a proton or sodium gradient. F-type ATPases consist of two structural domains, F(1) containing the extramembraneous catalytic core and F(0) containing the membrane proton channel, linked together by a central stalk and a peripheral stalk. During catalysis, ATP synthesis in the catalytic domain of F(1) is coupled via a rotary mechanism of the central stalk subunits to proton translocation. In terms of biological role, component of the F(0) channel, it forms part of the peripheral stalk, linking F(1) to F(0). The polypeptide is ATP synthase subunit b 2 (Granulibacter bethesdensis (strain ATCC BAA-1260 / CGDNIH1)).